We begin with the raw amino-acid sequence, 109 residues long: uncharacterized protein (109 aa).

This is an uncharacterized protein from Mycoplasma pneumoniae (strain ATCC 29342 / M129 / Subtype 1) (Mycoplasmoides pneumoniae).